A 410-amino-acid chain; its full sequence is Imidazolonepropionase (410 aa).

The Fe(3+) site is built by H71 and H73. 2 residues coordinate Zn(2+): H71 and H73. 4-imidazolone-5-propanoate is bound by residues R80, Y143, and H175. N-formimidoyl-L-glutamate is bound at residue Y143. H235 contributes to the Fe(3+) binding site. A Zn(2+)-binding site is contributed by H235. E238 contributes to the 4-imidazolone-5-propanoate binding site. D309 is a binding site for Fe(3+). D309 lines the Zn(2+) pocket.

The protein belongs to the metallo-dependent hydrolases superfamily. HutI family. The cofactor is Zn(2+). Fe(3+) is required as a cofactor.

The protein localises to the cytoplasm. It catalyses the reaction 4-imidazolone-5-propanoate + H2O = N-formimidoyl-L-glutamate. Its pathway is amino-acid degradation; L-histidine degradation into L-glutamate; N-formimidoyl-L-glutamate from L-histidine: step 3/3. Catalyzes the hydrolytic cleavage of the carbon-nitrogen bond in imidazolone-5-propanoate to yield N-formimidoyl-L-glutamate. It is the third step in the universal histidine degradation pathway. This is Imidazolonepropionase from Thermoplasma acidophilum (strain ATCC 25905 / DSM 1728 / JCM 9062 / NBRC 15155 / AMRC-C165).